A 448-amino-acid polypeptide reads, in one-letter code: DNA primase DnaG (448 aa).

A Toprim domain is found at 186 to 260; it reads DSIIVVEGRN…EADFVARAPP (75 aa). 3 residues coordinate Mg(2+): Glu192, Asp234, and Asp236. The interval 318-340 is disordered; that stretch reads AEVIEEPPEQPPKNEEIREEQSQ. A compositionally biased stretch (basic and acidic residues) spans 329-338; the sequence is PKNEEIREEQ.

Belongs to the archaeal DnaG primase family. Forms a ternary complex with MCM helicase and DNA. Component of the archaeal exosome complex. Mg(2+) serves as cofactor.

The enzyme catalyses ssDNA + n NTP = ssDNA/pppN(pN)n-1 hybrid + (n-1) diphosphate.. Functionally, RNA polymerase that catalyzes the synthesis of short RNA molecules used as primers for DNA polymerase during DNA replication. Also part of the exosome, which is a complex involved in RNA degradation. Acts as a poly(A)-binding protein that enhances the interaction between heteromeric, adenine-rich transcripts and the exosome. This Thermoplasma acidophilum (strain ATCC 25905 / DSM 1728 / JCM 9062 / NBRC 15155 / AMRC-C165) protein is DNA primase DnaG.